Consider the following 243-residue polypeptide: Peptidyl-tRNA hydrolase (243 aa).

Y14 provides a ligand contact to tRNA. H19 acts as the Proton acceptor in catalysis. Residues F64, N66, and N112 each contribute to the tRNA site. The interval 184-225 (AAQTRPAEKAKPLATAKPKEGEARTSGGSVAEVGAPPPSPTG) is disordered. Positions 189–206 (PAEKAKPLATAKPKEGEA) are enriched in basic and acidic residues.

The protein belongs to the PTH family. As to quaternary structure, monomer.

The protein localises to the cytoplasm. The enzyme catalyses an N-acyl-L-alpha-aminoacyl-tRNA + H2O = an N-acyl-L-amino acid + a tRNA + H(+). Hydrolyzes ribosome-free peptidyl-tRNAs (with 1 or more amino acids incorporated), which drop off the ribosome during protein synthesis, or as a result of ribosome stalling. Its function is as follows. Catalyzes the release of premature peptidyl moieties from peptidyl-tRNA molecules trapped in stalled 50S ribosomal subunits, and thus maintains levels of free tRNAs and 50S ribosomes. This is Peptidyl-tRNA hydrolase from Rhodospirillum rubrum (strain ATCC 11170 / ATH 1.1.1 / DSM 467 / LMG 4362 / NCIMB 8255 / S1).